We begin with the raw amino-acid sequence, 227 residues long: Cytochrome c oxidase subunit 2 (227 aa).

The Mitochondrial intermembrane segment spans residues 1-14 (MAHAVQYGFQDAAA). A helical transmembrane segment spans residues 15-45 (PIMEELLYFHDHTLMIVFMISSLVLYIISLM). Residues 46 to 59 (LSTELTHTSTMDAQ) lie on the Mitochondrial matrix side of the membrane. The helical transmembrane segment at 60-87 (EVETVWTILPAVILILIALPSLRILYMM) threads the bilayer. Residues 88-227 (DEIETPSLTL…YFEEWLLKTL (140 aa)) lie on the Mitochondrial intermembrane side of the membrane. 6 residues coordinate Cu cation: His161, Cys196, Glu198, Cys200, His204, and Met207. Glu198 provides a ligand contact to Mg(2+). Phosphotyrosine is present on Tyr218.

Belongs to the cytochrome c oxidase subunit 2 family. In terms of assembly, component of the cytochrome c oxidase (complex IV, CIV), a multisubunit enzyme composed of 14 subunits. The complex is composed of a catalytic core of 3 subunits MT-CO1, MT-CO2 and MT-CO3, encoded in the mitochondrial DNA, and 11 supernumerary subunits COX4I, COX5A, COX5B, COX6A, COX6B, COX6C, COX7A, COX7B, COX7C, COX8 and NDUFA4, which are encoded in the nuclear genome. The complex exists as a monomer or a dimer and forms supercomplexes (SCs) in the inner mitochondrial membrane with NADH-ubiquinone oxidoreductase (complex I, CI) and ubiquinol-cytochrome c oxidoreductase (cytochrome b-c1 complex, complex III, CIII), resulting in different assemblies (supercomplex SCI(1)III(2)IV(1) and megacomplex MCI(2)III(2)IV(2)). Found in a complex with TMEM177, COA6, COX18, COX20, SCO1 and SCO2. Interacts with TMEM177 in a COX20-dependent manner. Interacts with COX20. Interacts with COX16. The cofactor is Cu cation.

Its subcellular location is the mitochondrion inner membrane. It catalyses the reaction 4 Fe(II)-[cytochrome c] + O2 + 8 H(+)(in) = 4 Fe(III)-[cytochrome c] + 2 H2O + 4 H(+)(out). Its function is as follows. Component of the cytochrome c oxidase, the last enzyme in the mitochondrial electron transport chain which drives oxidative phosphorylation. The respiratory chain contains 3 multisubunit complexes succinate dehydrogenase (complex II, CII), ubiquinol-cytochrome c oxidoreductase (cytochrome b-c1 complex, complex III, CIII) and cytochrome c oxidase (complex IV, CIV), that cooperate to transfer electrons derived from NADH and succinate to molecular oxygen, creating an electrochemical gradient over the inner membrane that drives transmembrane transport and the ATP synthase. Cytochrome c oxidase is the component of the respiratory chain that catalyzes the reduction of oxygen to water. Electrons originating from reduced cytochrome c in the intermembrane space (IMS) are transferred via the dinuclear copper A center (CU(A)) of subunit 2 and heme A of subunit 1 to the active site in subunit 1, a binuclear center (BNC) formed by heme A3 and copper B (CU(B)). The BNC reduces molecular oxygen to 2 water molecules using 4 electrons from cytochrome c in the IMS and 4 protons from the mitochondrial matrix. The sequence is that of Cytochrome c oxidase subunit 2 (MT-CO2) from Galago senegalensis (Northern lesser bushbaby).